Reading from the N-terminus, the 381-residue chain is ELMO domain-containing protein 3 (381 aa).

Positions 170–324 constitute an ELMO domain; that stretch reads THGRVLQTIY…DLEALAKKSP (155 aa).

Both isoform 1 and isoform 2 are widely expressed.

It is found in the cell projection. It localises to the stereocilium. The protein localises to the kinocilium. The protein resides in the cytoplasm. Its subcellular location is the cytoskeleton. Acts as a GTPase-activating protein (GAP) for ARL2 with low specific activity. The polypeptide is ELMO domain-containing protein 3 (Elmod3) (Mus musculus (Mouse)).